The sequence spans 218 residues: Small ribosomal subunit protein uS3c (218 aa).

The KH type-2 domain occupies 47 to 118; that stretch reads VYKNIRNSSN…KLRMTLTEVT (72 aa).

Belongs to the universal ribosomal protein uS3 family. In terms of assembly, part of the 30S ribosomal subunit.

It is found in the plastid. The protein resides in the chloroplast. This chain is Small ribosomal subunit protein uS3c (rps3), found in Physcomitrium patens (Spreading-leaved earth moss).